The sequence spans 355 residues: Uroporphyrinogen decarboxylase (355 aa).

Substrate-binding positions include 27-31 (RQAGR), Asp-78, Tyr-155, Ser-210, and His-328.

Belongs to the uroporphyrinogen decarboxylase family. Homodimer.

It localises to the cytoplasm. The enzyme catalyses uroporphyrinogen III + 4 H(+) = coproporphyrinogen III + 4 CO2. It functions in the pathway porphyrin-containing compound metabolism; protoporphyrin-IX biosynthesis; coproporphyrinogen-III from 5-aminolevulinate: step 4/4. In terms of biological role, catalyzes the decarboxylation of four acetate groups of uroporphyrinogen-III to yield coproporphyrinogen-III. The polypeptide is Uroporphyrinogen decarboxylase (Pseudomonas paraeruginosa (strain DSM 24068 / PA7) (Pseudomonas aeruginosa (strain PA7))).